Here is a 63-residue protein sequence, read N- to C-terminus: Large ribosomal subunit protein uL30 (63 aa).

It belongs to the universal ribosomal protein uL30 family. As to quaternary structure, part of the 50S ribosomal subunit.

This chain is Large ribosomal subunit protein uL30, found in Stenotrophomonas maltophilia (strain K279a).